Consider the following 155-residue polypeptide: Protein E6 (155 aa).

Zinc fingers lie at residues 39–75 and 112–148; these read CNFCGNFLDFLELCEFDKKRLCLIWKNYVVTACCRCC and CQNCLSFLDIIEKLDCCGRGRPFHKVRGGWKGVCRLC.

The protein belongs to the papillomaviridae E6 protein family. Forms homodimers. Interacts with ubiquitin-protein ligase UBE3A/E6-AP; this interaction stimulates UBE3A ubiquitin activity. Interacts with host BAK1.

The protein localises to the host cytoplasm. The protein resides in the host nucleus. In terms of biological role, plays a major role in the induction and maintenance of cellular transformation. E6 associates with host UBE3A/E6-AP ubiquitin-protein ligase and modulates its activity. Protects host keratinocytes from apoptosis by mediating the degradation of host BAK1. May also inhibit host immune response. This is Protein E6 from Homo sapiens (Human).